The chain runs to 824 residues: Fibroblast growth factor receptor 2 (824 aa).

Residues 1–21 (MFSWSYLMGLVMVATATLSLA) form the signal peptide. At 22–374 (RPSYNIAEDT…LDSSSSEYTE (353 aa)) the chain is on the extracellular side. Positions 25–125 (YNIAEDTTLE…ETRYFIVNIT (101 aa)) constitute an Ig-like C2-type 1 domain. Cys-62 and Cys-107 are oxidised to a cystine. N-linked (GlcNAc...) asparagine glycans are attached at residues Asn-83, Asn-123, and Asn-128. The tract at residues 125-152 (TDGNSSGDDEDDNDGSEDFTNDNNHKRA) is disordered. The segment covering 131–144 (GDDEDDNDGSEDFT) has biased composition (acidic residues). 2 consecutive Ig-like C2-type domains span residues 153–246 (PYWT…YHLD) and 254–356 (PPIL…AWLT). Positions 160–177 (KLEKKLHAVPAANTVKFR) are heparin-binding. The cysteines at positions 178 and 230 are disulfide-linked. Residues Asn-227, Asn-240, Asn-264, Asn-295, Asn-316, and Asn-329 are each glycosylated (N-linked (GlcNAc...) asparagine). Cys-277 and Cys-340 form a disulfide bridge. The chain crosses the membrane as a helical span at residues 375–395 (IAIYCVGGFLIACMIGTIMMC). Topologically, residues 396 to 824 (HMKGRGKKSD…PLKHEATQPA (429 aa)) are cytoplasmic. Tyr-463 carries the post-translational modification Phosphotyrosine; by autocatalysis. Residues 478 to 767 (LTLGKPLGEG…LTQTTNEEYL (290 aa)) enclose the Protein kinase domain. Residues 484–492 (LGEGCFGQV), Lys-514, 562–564 (EYA), and Asn-568 each bind ATP. The residue at position 583 (Tyr-583) is a Phosphotyrosine; by autocatalysis. Asp-623 serves as the catalytic Proton acceptor. Phosphotyrosine; by autocatalysis occurs at positions 653, 654, and 766. The segment at 801–824 (SMNLAFPNPNTQMAPLKHEATQPA) is disordered.

This sequence belongs to the protein kinase superfamily. Tyr protein kinase family. Fibroblast growth factor receptor subfamily. In terms of assembly, monomer. Homodimer after ligand binding. In terms of processing, autophosphorylated. Binding of FGF family members together with heparan sulfate proteoglycan or heparin promotes receptor dimerization and autophosphorylation on tyrosine residues. Autophosphorylation occurs in trans between the two FGFR molecules present in the dimer. Post-translationally, N-glycosylated in the endoplasmic reticulum. The N-glycan chains undergo further maturation to an Endo H-resistant form in the Golgi apparatus. Ubiquitinated. FGFR2 is rapidly ubiquitinated after autophosphorylation, leading to internalization and degradation. Subject to degradation both in lysosomes and by the proteasome.

It localises to the cell membrane. The protein localises to the golgi apparatus. The protein resides in the cytoplasmic vesicle. It carries out the reaction L-tyrosyl-[protein] + ATP = O-phospho-L-tyrosyl-[protein] + ADP + H(+). Its activity is regulated as follows. Present in an inactive conformation in the absence of bound ligand. Ligand binding leads to dimerization and activation by autophosphorylation on tyrosine residues. In terms of biological role, tyrosine-protein kinase that acts as a cell-surface receptor for fibroblast growth factors and plays an essential role in the regulation of cell proliferation, differentiation, migration and apoptosis, and in the regulation of embryonic development. Required for normal embryonic patterning, limb bud development, lung morphogenesis, osteogenesis and skin development. Plays an essential role in the regulation of osteoblast differentiation, proliferation and apoptosis, and is required for normal skeleton development. Promotes cell proliferation in keratinocytes and immature osteoblasts, but promotes apoptosis in differentiated osteoblasts. Phosphorylates PLCG1, FRS2 and PAK4. Ligand binding leads to the activation of several signaling cascades. Activation of PLCG1 leads to the production of the cellular signaling molecules diacylglycerol and inositol 1,4,5-trisphosphate. Phosphorylation of FRS2 triggers recruitment of GRB2, GAB1, PIK3R1 and SOS1, and mediates activation of RAS, MAPK1/ERK2, MAPK3/ERK1 and the MAP kinase signaling pathway, as well as of the AKT1 signaling pathway. FGFR2 signaling is down-regulated by ubiquitination, internalization and degradation. Mutations that lead to constitutive kinase activation or impair normal FGFR2 maturation, internalization and degradation lead to aberrant signaling. Over-expressed FGFR2 promotes activation of STAT1. The polypeptide is Fibroblast growth factor receptor 2 (FGFR2) (Pleurodeles waltl (Iberian ribbed newt)).